The primary structure comprises 218 residues: MSYHEVNFIEMRVIGCLMEKEITTPDQYPLSLNALVNACNQKSNREPVTQLSEIEVQDALDALVSRGLVTEINASHSRVSKYQHRFCNTEFSDLQLSPAETAIICLMFVRGAQTPGELRSRSGRLHSFQSRDEVELALQSLQTKTGGPYVCLLPREPGKREQRYQECFCSESDRPAASFSSDTSDEYTQQLEAKVKELEAQVEKLNERINELENASGL.

Belongs to the UPF0502 family.

The protein is UPF0502 protein Mmwyl1_3509 of Marinomonas sp. (strain MWYL1).